The following is a 372-amino-acid chain: Queuine tRNA-ribosyltransferase (372 aa).

Asp-92 serves as the catalytic Proton acceptor. Substrate is bound by residues 92–96, Asp-146, Gln-188, and Gly-215; that span reads DSGGY. Residues 246-252 form an RNA binding region; that stretch reads GIGSLRE. Asp-265 (nucleophile) is an active-site residue. The tract at residues 270 to 274 is RNA binding; important for wobble base 34 recognition; it reads TRLGR. Residues Cys-303, Cys-305, Cys-308, and His-334 each contribute to the Zn(2+) site.

The protein belongs to the queuine tRNA-ribosyltransferase family. As to quaternary structure, homodimer. Within each dimer, one monomer is responsible for RNA recognition and catalysis, while the other monomer binds to the replacement base PreQ1. Zn(2+) serves as cofactor.

It catalyses the reaction 7-aminomethyl-7-carbaguanine + guanosine(34) in tRNA = 7-aminomethyl-7-carbaguanosine(34) in tRNA + guanine. The protein operates within tRNA modification; tRNA-queuosine biosynthesis. Its function is as follows. Catalyzes the base-exchange of a guanine (G) residue with the queuine precursor 7-aminomethyl-7-deazaguanine (PreQ1) at position 34 (anticodon wobble position) in tRNAs with GU(N) anticodons (tRNA-Asp, -Asn, -His and -Tyr). Catalysis occurs through a double-displacement mechanism. The nucleophile active site attacks the C1' of nucleotide 34 to detach the guanine base from the RNA, forming a covalent enzyme-RNA intermediate. The proton acceptor active site deprotonates the incoming PreQ1, allowing a nucleophilic attack on the C1' of the ribose to form the product. After dissociation, two additional enzymatic reactions on the tRNA convert PreQ1 to queuine (Q), resulting in the hypermodified nucleoside queuosine (7-(((4,5-cis-dihydroxy-2-cyclopenten-1-yl)amino)methyl)-7-deazaguanosine). The sequence is that of Queuine tRNA-ribosyltransferase from Prochlorococcus marinus subsp. pastoris (strain CCMP1986 / NIES-2087 / MED4).